The chain runs to 155 residues: NADPH-dependent 7-cyano-7-deazaguanine reductase (155 aa).

Catalysis depends on Cys53, which acts as the Thioimide intermediate. Asp60 acts as the Proton donor in catalysis. Substrate-binding positions include 75-77 (VES) and 94-95 (HE).

It belongs to the GTP cyclohydrolase I family. QueF type 1 subfamily.

The protein resides in the cytoplasm. It carries out the reaction 7-aminomethyl-7-carbaguanine + 2 NADP(+) = 7-cyano-7-deazaguanine + 2 NADPH + 3 H(+). It functions in the pathway tRNA modification; tRNA-queuosine biosynthesis. Its function is as follows. Catalyzes the NADPH-dependent reduction of 7-cyano-7-deazaguanine (preQ0) to 7-aminomethyl-7-deazaguanine (preQ1). The chain is NADPH-dependent 7-cyano-7-deazaguanine reductase from Brucella abortus (strain S19).